We begin with the raw amino-acid sequence, 310 residues long: Protoheme IX farnesyltransferase 2 (310 aa).

Transmembrane regions (helical) follow at residues proline 25–glycine 45, leucine 49–isoleucine 69, histidine 98–threonine 118, leucine 121–methionine 141, serine 145–cysteine 165, valine 176–phenylalanine 196, isoleucine 222–threonine 242, alanine 245–tyrosine 265, and glutamine 277–phenylalanine 297.

Belongs to the UbiA prenyltransferase family. Protoheme IX farnesyltransferase subfamily.

Its subcellular location is the cell inner membrane. It catalyses the reaction heme b + (2E,6E)-farnesyl diphosphate + H2O = Fe(II)-heme o + diphosphate. Its pathway is porphyrin-containing compound metabolism; heme O biosynthesis; heme O from protoheme: step 1/1. Its function is as follows. Converts heme B (protoheme IX) to heme O by substitution of the vinyl group on carbon 2 of heme B porphyrin ring with a hydroxyethyl farnesyl side group. This chain is Protoheme IX farnesyltransferase 2, found in Shewanella sp. (strain MR-7).